Reading from the N-terminus, the 254-residue chain is Transmembrane protein 269 (254 aa).

5 helical membrane-spanning segments follow: residues 44–64 (IINA…FCSF), 69–89 (YCAS…GTMT), 113–135 (LASA…IYVL), 171–191 (LTKG…LFMI), and 210–230 (IVYI…TAFY).

It is found in the membrane. This Mus musculus (Mouse) protein is Transmembrane protein 269.